The primary structure comprises 545 residues: Germacrene D synthase 1 (545 aa).

Mg(2+) contacts are provided by Asp298, Asp302, Asn443, and Glu451. Residues 298–302 carry the DDXXD motif motif; it reads DDTFD.

The protein belongs to the terpene synthase family. The cofactor is Mg(2+).

The protein resides in the cytoplasm. It localises to the cytosol. It carries out the reaction (2E,6E)-farnesyl diphosphate = (-)-germacrene D + diphosphate. It functions in the pathway secondary metabolite biosynthesis; terpenoid biosynthesis. In terms of biological role, sesquiterpene synthase involved in germacrene D biosynthesis. Also produces at least 13 additional sesquiterpene products, including germacrene C and (+)-germacrene A, beta-ylangene, (E)-beta-farnesene and (E,E)-alpha-farnesene. This is Germacrene D synthase 1 from Pogostemon cablin (Patchouli).